Reading from the N-terminus, the 227-residue chain is Cytochrome c oxidase subunit 2 (227 aa).

Residues 1–14 are Mitochondrial intermembrane-facing; sequence MAYPLQLGLQDATS. A helical membrane pass occupies residues 15-45; that stretch reads PIMEELMNFHDHTLMIVFLISSLVLYVISSM. The Mitochondrial matrix segment spans residues 46–59; sequence LTTKLTHTSTMDAQ. A helical membrane pass occupies residues 60 to 87; it reads EVETIWTILPAVILIMIALPSLRILYMM. Residues 88-227 lie on the Mitochondrial intermembrane side of the membrane; sequence DEINNPVLTV…NFETWSVSMI (140 aa). H161, C196, E198, C200, H204, and M207 together coordinate Cu cation. E198 contributes to the Mg(2+) binding site.

The protein belongs to the cytochrome c oxidase subunit 2 family. Component of the cytochrome c oxidase (complex IV, CIV), a multisubunit enzyme composed of 14 subunits. The complex is composed of a catalytic core of 3 subunits MT-CO1, MT-CO2 and MT-CO3, encoded in the mitochondrial DNA, and 11 supernumerary subunits COX4I, COX5A, COX5B, COX6A, COX6B, COX6C, COX7A, COX7B, COX7C, COX8 and NDUFA4, which are encoded in the nuclear genome. The complex exists as a monomer or a dimer and forms supercomplexes (SCs) in the inner mitochondrial membrane with NADH-ubiquinone oxidoreductase (complex I, CI) and ubiquinol-cytochrome c oxidoreductase (cytochrome b-c1 complex, complex III, CIII), resulting in different assemblies (supercomplex SCI(1)III(2)IV(1) and megacomplex MCI(2)III(2)IV(2)). Found in a complex with TMEM177, COA6, COX18, COX20, SCO1 and SCO2. Interacts with TMEM177 in a COX20-dependent manner. Interacts with COX20. Interacts with COX16. It depends on Cu cation as a cofactor.

It is found in the mitochondrion inner membrane. The enzyme catalyses 4 Fe(II)-[cytochrome c] + O2 + 8 H(+)(in) = 4 Fe(III)-[cytochrome c] + 2 H2O + 4 H(+)(out). Its function is as follows. Component of the cytochrome c oxidase, the last enzyme in the mitochondrial electron transport chain which drives oxidative phosphorylation. The respiratory chain contains 3 multisubunit complexes succinate dehydrogenase (complex II, CII), ubiquinol-cytochrome c oxidoreductase (cytochrome b-c1 complex, complex III, CIII) and cytochrome c oxidase (complex IV, CIV), that cooperate to transfer electrons derived from NADH and succinate to molecular oxygen, creating an electrochemical gradient over the inner membrane that drives transmembrane transport and the ATP synthase. Cytochrome c oxidase is the component of the respiratory chain that catalyzes the reduction of oxygen to water. Electrons originating from reduced cytochrome c in the intermembrane space (IMS) are transferred via the dinuclear copper A center (CU(A)) of subunit 2 and heme A of subunit 1 to the active site in subunit 1, a binuclear center (BNC) formed by heme A3 and copper B (CU(B)). The BNC reduces molecular oxygen to 2 water molecules using 4 electrons from cytochrome c in the IMS and 4 protons from the mitochondrial matrix. This Malacothrix typica (Long-eared mouse) protein is Cytochrome c oxidase subunit 2 (MT-CO2).